Consider the following 157-residue polypeptide: Protein Smg homolog (157 aa).

Belongs to the Smg family.

The protein is Protein Smg homolog of Aeromonas salmonicida (strain A449).